The chain runs to 292 residues: Galactinol synthase 2 (292 aa).

Lys65 is an active-site residue. Mn(2+) contacts are provided by Asp81, Asp83, and His218.

This sequence belongs to the glycosyltransferase 8 family. Galactosyltransferase subfamily. Requires a divalent metal cation as cofactor. In terms of tissue distribution, present in phloem-associated intermediary cells. Weakly expressed in leaves.

It is found in the cytoplasm. The catalysed reaction is myo-inositol + UDP-alpha-D-galactose = alpha-D-galactosyl-(1-&gt;3)-1D-myo-inositol + UDP + H(+). Functionally, may promote plant stress tolerance. Galactinol synthase mainly involved in the biosynthesis of transport raffinose family oligosaccharides (RFOs) that function as osmoprotectants. The chain is Galactinol synthase 2 (GOLS2) from Ajuga reptans (Bugle).